Here is a 476-residue protein sequence, read N- to C-terminus: Glycogen synthase (476 aa).

Residue lysine 15 coordinates ADP-alpha-D-glucose.

It belongs to the glycosyltransferase 1 family. Bacterial/plant glycogen synthase subfamily.

The enzyme catalyses [(1-&gt;4)-alpha-D-glucosyl](n) + ADP-alpha-D-glucose = [(1-&gt;4)-alpha-D-glucosyl](n+1) + ADP + H(+). It participates in glycan biosynthesis; glycogen biosynthesis. Its function is as follows. Synthesizes alpha-1,4-glucan chains using ADP-glucose. The polypeptide is Glycogen synthase (Yersinia pseudotuberculosis serotype IB (strain PB1/+)).